Here is a 199-residue protein sequence, read N- to C-terminus: Recombination protein RecR (199 aa).

The segment at 57–72 (CSVCGNITEDDPCPIC) adopts a C4-type zinc-finger fold. The region spanning 80–176 (SRVLVVERSR…KVTRLAHGLS (97 aa)) is the Toprim domain.

It belongs to the RecR family.

May play a role in DNA repair. It seems to be involved in an RecBC-independent recombinational process of DNA repair. It may act with RecF and RecO. The sequence is that of Recombination protein RecR from Limosilactobacillus fermentum (strain NBRC 3956 / LMG 18251) (Lactobacillus fermentum).